The following is a 60-amino-acid chain: Ixodegrin YY-39 (60 aa).

The signal sequence occupies residues 1 to 21; sequence MNAALIAALLILGALTLDATA. The Cell attachment site signature appears at 49-51; the sequence is RGD.

It belongs to the ixodegrin family. Contains 3 disulfide bonds. Expressed in salivary glands.

The protein resides in the secreted. In terms of biological role, tick salivary platelet aggregation inhibitor that plays an important part in the anti-hemostatic strategy of ticks. Inhibits platelet aggregation induced by ADP, thrombin and thromboxane A2 (TXA2). Blocks platelet adhesion to soluble collagen (most probably through the binding to alpha-2/beta-1 integrin (ITGA2/ITGB1)) and binds to purified glycoprotein IIb/IIIa (ITGA2B/ITGB3) in a dose-dependent manner. In vivo, reduces thrombus weight effectively in a rat arteriovenous shunt model and inhibits thrombosis in a carrageenan-induced mouse tail thrombosis model. The chain is Ixodegrin YY-39 from Ixodes scapularis (Black-legged tick).